Reading from the N-terminus, the 115-residue chain is MFSIIQNIEKEQIKKNIPVFRSGDTIEVKVWVIEGSKKRLQSFEGIVIAIKNRCLNSSFTVRKISNGEGVERVFQTHSHGIEEILVKRKGLVRKAKLYYLRTRTGKAARIKERLN.

Belongs to the bacterial ribosomal protein bL19 family.

This protein is located at the 30S-50S ribosomal subunit interface and may play a role in the structure and function of the aminoacyl-tRNA binding site. In Buchnera aphidicola subsp. Acyrthosiphon pisum (strain APS) (Acyrthosiphon pisum symbiotic bacterium), this protein is Large ribosomal subunit protein bL19 (rplS).